The sequence spans 475 residues: ATP synthase subunit beta (475 aa).

Gly-153–Thr-160 is an ATP binding site.

Belongs to the ATPase alpha/beta chains family. F-type ATPases have 2 components, CF(1) - the catalytic core - and CF(0) - the membrane proton channel. CF(1) has five subunits: alpha(3), beta(3), gamma(1), delta(1), epsilon(1). CF(0) has three main subunits: a(1), b(2) and c(9-12). The alpha and beta chains form an alternating ring which encloses part of the gamma chain. CF(1) is attached to CF(0) by a central stalk formed by the gamma and epsilon chains, while a peripheral stalk is formed by the delta and b chains.

It is found in the cell membrane. The enzyme catalyses ATP + H2O + 4 H(+)(in) = ADP + phosphate + 5 H(+)(out). Produces ATP from ADP in the presence of a proton gradient across the membrane. The catalytic sites are hosted primarily by the beta subunits. In Limosilactobacillus reuteri (strain DSM 20016) (Lactobacillus reuteri), this protein is ATP synthase subunit beta.